The following is a 419-amino-acid chain: L-rhamnose isomerase (419 aa).

Residues histidine 262, aspartate 294, and aspartate 296 each contribute to the Mn(2+) site.

The protein belongs to the rhamnose isomerase family. Homotetramer. It depends on Mn(2+) as a cofactor.

It is found in the cytoplasm. The catalysed reaction is L-rhamnopyranose = L-rhamnulose. Its pathway is carbohydrate degradation; L-rhamnose degradation; glycerone phosphate from L-rhamnose: step 1/3. Catalyzes the interconversion of L-rhamnose and L-rhamnulose. The protein is L-rhamnose isomerase of Salmonella enteritidis PT4 (strain P125109).